Here is a 74-residue protein sequence, read N- to C-terminus: Protein DELETION OF SUV3 SUPPRESSOR 1(I) (74 aa).

The segment at 35–74 (EKEEVKEVSQQWEDDWDDDDVNDDFSRQLRKELENGTDKK) is disordered. Acidic residues predominate over residues 46 to 57 (WEDDWDDDDVND). Residues 58-74 (DFSRQLRKELENGTDKK) show a composition bias toward basic and acidic residues.

The protein belongs to the DSS1/SEM1 family. In terms of assembly, part of the 26S proteasome. Interacts with BRCA2A and BRCA2B. Interacts with UCH1 and UCH2. Can form a tripartite complex with both RAD51 and BRCA2B or both DMC1 and BRCA2B.

Its function is as follows. Subunit of the 26S proteasome which plays a role in ubiquitin-dependent proteolysis. The chain is Protein DELETION OF SUV3 SUPPRESSOR 1(I) from Arabidopsis thaliana (Mouse-ear cress).